We begin with the raw amino-acid sequence, 264 residues long: Myozenin-2 (264 aa).

Omega-N-methylarginine is present on arginine 53. Positions 90 to 135 are disordered; sequence GRVDGSNLEGGSQQGPSTPPNTPDPRSPPNPENIAPGYSGPLKEIP. Phosphoserine is present on serine 101. The segment covering 106–120 has biased composition (pro residues); the sequence is STPPNTPDPRSPPNP. Phosphothreonine occurs at positions 107 and 111. Serine 116 bears the Phosphoserine mark.

The protein belongs to the myozenin family. As to quaternary structure, interacts via its C-terminus with spectrin repeats 3 and 4 of ACTN2. Interacts with ACTN1, LDB3, MYOT and PPP3CA. In terms of tissue distribution, expressed specifically in heart and skeletal muscle. In skeletal muscle, localized to the soleus and plantaris muscles, which are predominantly composed of slow-twitch fibers.

Its subcellular location is the cytoplasm. It is found in the myofibril. The protein resides in the sarcomere. The protein localises to the z line. Functionally, myozenins may serve as intracellular binding proteins involved in linking Z line proteins such as alpha-actinin, gamma-filamin, TCAP/telethonin, LDB3/ZASP and localizing calcineurin signaling to the sarcomere. Plays an important role in the modulation of calcineurin signaling. May play a role in myofibrillogenesis. This chain is Myozenin-2, found in Mus musculus (Mouse).